Reading from the N-terminus, the 432-residue chain is Alpha-galactosidase (432 aa).

Lys2 to Asp68 is a binding site for NAD(+). Residue Asn148 coordinates substrate. Residue Cys169 participates in Mn(2+) binding. His170 serves as the catalytic Proton donor. Position 199 (His199) interacts with Mn(2+).

Belongs to the glycosyl hydrolase 4 family. As to quaternary structure, homodimer. Requires Mn(2+) as cofactor. NAD(+) serves as cofactor.

Its subcellular location is the cytoplasm. It carries out the reaction Hydrolysis of terminal, non-reducing alpha-D-galactose residues in alpha-D-galactosides, including galactose oligosaccharides, galactomannans and galactolipids.. Functionally, catalyzes the hydrolysis of melibiose and alpha-galactosides of the raffinose family of oligosaccharides (RFOs) such as raffinose and stachyose. Cannot act on polymeric substrates such as locust bean gum. This is Alpha-galactosidase from Bacillus subtilis (strain 168).